Here is a 45-residue protein sequence, read N- to C-terminus: Large ribosomal subunit protein bL34 (45 aa).

The protein belongs to the bacterial ribosomal protein bL34 family.

The sequence is that of Large ribosomal subunit protein bL34 (rpmH) from Streptomyces coelicolor (strain ATCC BAA-471 / A3(2) / M145).